Consider the following 117-residue polypeptide: MRASSFLIVVVFLIAGTLVLEAAVTGVPVKGQDTVKGRVPFNGQDPVKGQVSVKGQDKVKAQEPVKGPVSTKPGSCPIILIRCAMLNPPNRCLKDTDCPGIKKCCEGSCGMACFVPQ.

The signal sequence occupies residues 1 to 22; that stretch reads MRASSFLIVVVFLIAGTLVLEA. A propeptide spanning residues 23 to 60 is cleaved from the precursor; it reads AVTGVPVKGQDTVKGRVPFNGQDPVKGQVSVKGQDKVK. SVP-1 clotting repeat units follow at residues 29 to 54 and 55 to 72; these read VKGQ…VSVK and GQDK…VSTK. Residues 29 to 72 are 2 X tandem repeats of SVP-1 like motif; the sequence is VKGQDTVKGRVPFNGQDPVKGQVSVKGQDKVKAQEPVKGPVSTK. Residues 69–117 form the WAP domain; sequence VSTKPGSCPIILIRCAMLNPPNRCLKDTDCPGIKKCCEGSCGMACFVPQ. 4 cysteine pairs are disulfide-bonded: C76–C105, C83–C109, C92–C104, and C98–C113.

The protein resides in the secreted. Its function is as follows. Neutrophil and pancreatic elastase-specific inhibitor of skin. It may prevent elastase-mediated tissue proteolysis. Has been shown to inhibit the alpha-4-beta-2/CHRNA2-CHRNB2 nicotinic acetylcholine receptor and to produce a weak inhibition on Kv11.1/KCNH2/ERG1 and on the transient receptor potential cation channel subfamily V member 1 (TRPV1). This is Elafin (PI3) from Homo sapiens (Human).